Reading from the N-terminus, the 145-residue chain is Mannitol-specific phosphotransferase enzyme IIA component (145 aa).

The PTS EIIA type-2 domain maps to 2 to 145 (ENLTNISIEL…EEITENLAIA (144 aa)). H62 acts as the Tele-phosphohistidine intermediate in catalysis. The residue at position 62 (H62) is a Phosphohistidine; by HPr.

It localises to the cytoplasm. In terms of biological role, the phosphoenolpyruvate-dependent sugar phosphotransferase system (sugar PTS), a major carbohydrate active transport system, catalyzes the phosphorylation of incoming sugar substrates concomitantly with their translocation across the cell membrane. The enzyme II CmtAB PTS system is involved in D-mannitol transport. This chain is Mannitol-specific phosphotransferase enzyme IIA component, found in Enterococcus faecalis (strain ATCC 700802 / V583).